The sequence spans 404 residues: Argininosuccinate synthase (404 aa).

ATP is bound by residues 12–20 and alanine 40; that span reads AYSGGLDTS. Positions 92 and 97 each coordinate L-citrulline. Residue glycine 122 coordinates ATP. Residues threonine 124, asparagine 128, and aspartate 129 each coordinate L-aspartate. Position 128 (asparagine 128) interacts with L-citrulline. Residues arginine 132, serine 181, serine 190, glutamate 266, and tyrosine 278 each coordinate L-citrulline.

It belongs to the argininosuccinate synthase family. Type 1 subfamily. As to quaternary structure, homotetramer.

It localises to the cytoplasm. The catalysed reaction is L-citrulline + L-aspartate + ATP = 2-(N(omega)-L-arginino)succinate + AMP + diphosphate + H(+). It functions in the pathway amino-acid biosynthesis; L-arginine biosynthesis; L-arginine from L-ornithine and carbamoyl phosphate: step 2/3. This is Argininosuccinate synthase from Photorhabdus laumondii subsp. laumondii (strain DSM 15139 / CIP 105565 / TT01) (Photorhabdus luminescens subsp. laumondii).